A 131-amino-acid polypeptide reads, in one-letter code: UPF0102 protein YraN (131 aa).

Residues 1–19 (MATVPTRSGSPRQLTTKQT) show a composition bias toward polar residues. The disordered stretch occupies residues 1–20 (MATVPTRSGSPRQLTTKQTG).

This sequence belongs to the UPF0102 family.

The protein is UPF0102 protein YraN of Escherichia coli O17:K52:H18 (strain UMN026 / ExPEC).